We begin with the raw amino-acid sequence, 117 residues long: Large ribosomal subunit protein bL20 (117 aa).

Belongs to the bacterial ribosomal protein bL20 family.

Functionally, binds directly to 23S ribosomal RNA and is necessary for the in vitro assembly process of the 50S ribosomal subunit. It is not involved in the protein synthesizing functions of that subunit. This is Large ribosomal subunit protein bL20 from Mesomycoplasma hyopneumoniae (strain 232) (Mycoplasma hyopneumoniae).